We begin with the raw amino-acid sequence, 201 residues long: Regulator of G-protein signaling rgs-1 (201 aa).

In terms of domain architecture, RGS spans 37–156 (SWQQSFDTLM…FLTSIFYRET (120 aa)). The tract at residues 168–201 (GGDEEKEREQRAERARLNVPATAAEGSSKDISMV) is disordered. The span at 170-183 (DEEKEREQRAERAR) shows a compositional bias: basic and acidic residues.

Expressed in most or all neurons.

Functionally, inhibits G protein signaling in nervous system, interacting preferentially with the G(O) subfamily member goa-1. In vitro, protein acts as a GTPase activator of goa-1. Rgs-1 and rgs-2 redundantly adjust signaling when worms are fed to allow rapid induction of egg-laying behavior. The sequence is that of Regulator of G-protein signaling rgs-1 (rgs-1) from Caenorhabditis elegans.